Consider the following 349-residue polypeptide: PDZ and LIM domain protein 2 (349 aa).

The PDZ domain occupies 1 to 84; it reads MALTVDVAGP…PLRLQLDRSQ (84 aa). The tract at residues 74–147 is disordered; it reads SPLRLQLDRS…TPPPTSPVAL (74 aa). A compositionally biased stretch (polar residues) spans 81–94; sequence DRSQTASPGQTNGE. Residues S124, S127, S129, S134, and S137 each carry the phosphoserine modification. A phosphothreonine mark is found at T138 and T142. 2 positions are modified to phosphoserine: S143 and S163. The disordered stretch occupies residues 169-212; the sequence is AHHLTYPGHPTSQQAGHSSPSDSAVRVLLHSPGRPSSPRFSSLD. The span at 178 to 190 shows a compositional bias: polar residues; that stretch reads PTSQQAGHSSPSD. Phosphoserine is present on residues S199, S204, S205, S209, S210, and S263. Residues 199–210 are compositionally biased toward low complexity; the sequence is SPGRPSSPRFSS. Positions 281–341 constitute an LIM zinc-binding domain; the sequence is HTCEKCSVNI…EKHARQRYSM (61 aa).

As to quaternary structure, interacts with alpha-actinins ACTN1 and ACTN4, FLNA and MYH9. Interacts (via LIM zinc-binding domain) with MKRN2. In terms of tissue distribution, highly expressed in lung. Expressed at intermediate level in kidney, testis and spleen. Weakly expressed in heart and brain.

It localises to the cytoplasm. Its subcellular location is the cytoskeleton. In terms of biological role, probable adapter protein located at the actin cytoskeleton that promotes cell attachment. Necessary for the migratory capacity of epithelial cells. Overexpression enhances cell adhesion to collagen and fibronectin and suppresses anchorage independent growth. May contribute to tumor cell migratory capacity. This Mus musculus (Mouse) protein is PDZ and LIM domain protein 2 (Pdlim2).